A 156-amino-acid chain; its full sequence is Bacterial microcompartment shell protein PduK (156 aa).

Residues 4–89 (SLGLLEVSGL…PGDGILSHSV (86 aa)) form the BMC domain. The segment at 81 to 119 (GDGILSHSVTPESESEPAPAPTPVVPHEEIPEDHAAPEA) is disordered. Positions 106 to 116 (PHEEIPEDHAA) are enriched in basic and acidic residues.

It belongs to the bacterial microcompartments protein family. As to quaternary structure, interacts with shell protein PduA and assembly protein PduM. Interacts with PduP, probably with its first 18 residues. The cofactor is Fe cation.

It is found in the bacterial microcompartment. The protein operates within polyol metabolism; 1,2-propanediol degradation. Functionally, a minor shell protein of the bacterial microcompartment (BMC) dedicated to 1,2-propanediol (1,2-PD) degradation. In terms of biological role, expression of a cosmid containing the full 21-gene pdu operon in E.coli allows E.coli to grow on 1,2-propanediol (1,2-PD) with the appearance of bacterial microcompartments (BMC) in its cytoplasm. Overexpression of this protein leads to the appearance of a single large aggregate complex in the cytoplasm. Its function is as follows. The 1,2-PD-specific bacterial microcompartment (BMC) concentrates low levels of 1,2-PD catabolic enzymes, concentrates volatile reaction intermediates thus enhancing pathway flux and keeps the level of toxic, mutagenic propionaldehyde low. The polypeptide is Bacterial microcompartment shell protein PduK (Citrobacter freundii).